Consider the following 300-residue polypeptide: tRNA dimethylallyltransferase (300 aa).

9–16 (GPTASGKT) is an ATP binding site. 11–16 (TASGKT) contributes to the substrate binding site. The tract at residues 34–37 (DSQQ) is interaction with substrate tRNA.

This sequence belongs to the IPP transferase family. Monomer. Mg(2+) is required as a cofactor.

It catalyses the reaction adenosine(37) in tRNA + dimethylallyl diphosphate = N(6)-dimethylallyladenosine(37) in tRNA + diphosphate. Functionally, catalyzes the transfer of a dimethylallyl group onto the adenine at position 37 in tRNAs that read codons beginning with uridine, leading to the formation of N6-(dimethylallyl)adenosine (i(6)A). The polypeptide is tRNA dimethylallyltransferase (Anaeromyxobacter sp. (strain Fw109-5)).